The chain runs to 273 residues: Dermonecrotic toxin LhSicTox-alphaIA2aii (273 aa).

The active site involves His-5. Residues Glu-25 and Asp-27 each coordinate Mg(2+). His-41 acts as the Nucleophile in catalysis. 2 disulfide bridges follow: Cys-45/Cys-51 and Cys-47/Cys-190. Position 85 (Asp-85) interacts with Mg(2+).

The protein belongs to the arthropod phospholipase D family. Class II subfamily. Mg(2+) is required as a cofactor. In terms of tissue distribution, expressed by the venom gland.

Its subcellular location is the secreted. It carries out the reaction an N-(acyl)-sphingosylphosphocholine = an N-(acyl)-sphingosyl-1,3-cyclic phosphate + choline. The enzyme catalyses an N-(acyl)-sphingosylphosphoethanolamine = an N-(acyl)-sphingosyl-1,3-cyclic phosphate + ethanolamine. It catalyses the reaction a 1-acyl-sn-glycero-3-phosphocholine = a 1-acyl-sn-glycero-2,3-cyclic phosphate + choline. The catalysed reaction is a 1-acyl-sn-glycero-3-phosphoethanolamine = a 1-acyl-sn-glycero-2,3-cyclic phosphate + ethanolamine. In terms of biological role, dermonecrotic toxins cleave the phosphodiester linkage between the phosphate and headgroup of certain phospholipids (sphingolipid and lysolipid substrates), forming an alcohol (often choline) and a cyclic phosphate. This toxin acts on sphingomyelin (SM). It may also act on ceramide phosphoethanolamine (CPE), lysophosphatidylcholine (LPC) and lysophosphatidylethanolamine (LPE), but not on lysophosphatidylserine (LPS), and lysophosphatidylglycerol (LPG). It acts by transphosphatidylation, releasing exclusively cyclic phosphate products as second products. Induces dermonecrosis, hemolysis, increased vascular permeability, edema, inflammatory response, and platelet aggregation. This Loxosceles hirsuta (Recluse spider) protein is Dermonecrotic toxin LhSicTox-alphaIA2aii.